The following is an 89-amino-acid chain: Extender of the chronological lifespan protein ecl3 (89 aa).

Belongs to the ecl1 family.

The protein localises to the nucleus. Involved in chronological cell aging. This Schizosaccharomyces pombe (strain 972 / ATCC 24843) (Fission yeast) protein is Extender of the chronological lifespan protein ecl3 (ecl3).